The sequence spans 272 residues: ATP synthase subunit a (272 aa).

Helical transmembrane passes span 41–61 (TLNIDSMFFSVVLGLLFLVLF), 101–121 (LIAPLALTIFVWVFLMNLMDL), 147–167 (DVNITLSMALGVFILILFYSI), 212–232 (LFGNMYAGELIFILIAGLLPW), and 243–263 (AIFHILIITLQAFIFMVLTIV).

It belongs to the ATPase A chain family. F-type ATPases have 2 components, CF(1) - the catalytic core - and CF(0) - the membrane proton channel. CF(1) has five subunits: alpha(3), beta(3), gamma(1), delta(1), epsilon(1). CF(0) has three main subunits: a(1), b(2) and c(9-12). The alpha and beta chains form an alternating ring which encloses part of the gamma chain. CF(1) is attached to CF(0) by a central stalk formed by the gamma and epsilon chains, while a peripheral stalk is formed by the delta and b chains.

Its subcellular location is the cell inner membrane. Key component of the proton channel; it plays a direct role in the translocation of protons across the membrane. This Cronobacter sakazakii (strain ATCC BAA-894) (Enterobacter sakazakii) protein is ATP synthase subunit a.